The chain runs to 2813 residues: A-kinase anchor protein 13 (2813 aa).

Disordered regions lie at residues 304 to 400 and 415 to 439; these read AQDP…QDSC and LSSCGNRNEETGTKSSGMPTDQESL. Polar residues predominate over residues 427-439; it reads TKSSGMPTDQESL. An important for interaction with PRKAR2A region spans residues 494–516; it reads WKNVLQGGESTKERFENSNIGTA. 3 disordered regions span residues 539-585, 632-653, and 690-726; these read AASS…VDQN, HQNSETNSSHAQSQKGKSSPIC, and SESTTARQPSSQDPPDASHCEDPQAHTVTSDPVRDTQ. The span at 561–577 shows a compositional bias: basic and acidic residues; it reads STEKTAETETSRSREES. A compositionally biased stretch (polar residues) spans 690–702; the sequence is SESTTARQPSSQD. The residue at position 790 (Ser-790) is a Phosphoserine. Disordered regions lie at residues 805 to 856 and 939 to 965; these read VPSQ…AAEL and ENALSSGTLQEEQRTPPPGQDTQQFHE. Thr-815 bears the Phosphothreonine mark. Positions 835 to 844 are enriched in basic and acidic residues; it reads PDTRPLEDRA. 2 stretches are compositionally biased toward polar residues: residues 847-856 and 939-948; these read LSTSSTAAEL and ENALSSGTLQ. Thr-953 carries the post-translational modification Phosphothreonine. A Phosphoserine modification is found at Ser-983. Disordered stretches follow at residues 1431 to 1455 and 1467 to 1542; these read GVLKRESGSDSDLFHSPSDDMDSII and DITG…DSIT. Over residues 1467–1478 the composition is skewed to low complexity; it reads DITGSSSSTDDT. Over residues 1488–1497 the composition is skewed to polar residues; it reads GSDVSLSQIL. A phosphoserine mark is found at Ser-1489, Ser-1507, Ser-1540, Ser-1565, and Ser-1602. Residues 1525–1540 show a composition bias toward acidic residues; it reads SEPADPGDVEEEEMDS. An important for interaction with MAP2K3 region spans residues 1585–1715; the sequence is RVLGDVVRRP…HSTFHNTSAN (131 aa). The segment at 1601–1638 is disordered; sequence FSLEGLTGGAGVGNKPSSSLEVSSANAEELRHPFSGEE. Polar residues predominate over residues 1615-1626; sequence KPSSSLEVSSAN. Basic and acidic residues predominate over residues 1628 to 1638; it reads EELRHPFSGEE. Phosphoserine is present on residues Ser-1642, Ser-1645, and Ser-1647. Lys-1670 is subject to N6-methyllysine. The disordered stretch occupies residues 1755–1793; it reads KMSSSKKSKEKEKEKDKIKEKEKDSKDKEKDKKTVNGHT. The stretch at 1758–1790 forms a coiled coil; that stretch reads SSKKSKEKEKEKDKIKEKEKDSKDKEKDKKTVN. The segment covering 1761-1788 has biased composition (basic and acidic residues); the sequence is KSKEKEKEKDKIKEKEKDSKDKEKDKKT. The segment at 1791–1838 adopts a Phorbol-ester/DAG-type zinc-finger fold; it reads GHTFSSIPVVGPISCSQCMKPFTNKDAYTCANCSAFVHKGCRESLASC. Phosphoserine is present on residues Ser-1876, Ser-1895, and Ser-1929. Positions 1919 to 2813 are interaction with ESR1; the sequence is MSNTWKFLSH…VSAEGEEIFC (895 aa). Residue Thr-1930 is modified to Phosphothreonine. A phosphoserine mark is found at Ser-1932 and Ser-1945. A DH domain is found at 1994-2191; that stretch reads KRQEVIYELM…KDVIGAVDSK (198 aa). The PH domain maps to 2231 to 2333; the sequence is KLVRDGSVFL…WIQIIQDTIN (103 aa). Residues Ser-2345 and Ser-2398 each carry the phosphoserine modification. Positions 2345-2381 form a coiled coil; sequence SENEEEKKMLDTRARELKEQLHQKDQKILLLLEEKEM. Positions 2466-2502 are disordered; that stretch reads ETFGGFDSHQMNASKGGEKEEGDDGQDLRRTESDSGL. Thr-2467 carries the phosphothreonine modification. Ser-2473 carries the phosphoserine modification. The span at 2491–2502 shows a compositional bias: basic and acidic residues; sequence QDLRRTESDSGL. Ser-2563 and Ser-2566 each carry phosphoserine. A coiled-coil region spans residues 2568–2683; the sequence is LIEQEKQRSL…RLSQRQTERD (116 aa). Positions 2665 to 2684 are enriched in basic and acidic residues; sequence QEQLRREAERLSQRQTERDL. A disordered region spans residues 2665 to 2813; sequence QEQLRREAER…VSAEGEEIFC (149 aa). Phosphoserine is present on residues Ser-2703, Ser-2709, and Ser-2728. Over residues 2720 to 2735 the composition is skewed to polar residues; that stretch reads SLDSELSVSPKRNSIS. Positions 2760 to 2771 are enriched in low complexity; the sequence is QSQAPASTSAST.

In terms of assembly, interacts with the cAMP-dependent protein kinase (PKA) holoenzyme and with the regulatory subunit PRKAR2A. Interacts with RHOA. Also interacts with RHOB and RHOC. Identified in a ternary complex with RHOA and PRKAR2A. Identified in a complex with NR3C1 and RHOA. Interacts with BRAF and KSR1. Identified in a complex with BRAF and KSR1. Component of a signaling complex containing at least AKAP13, PKN1, MAPK14, ZAK and MAP2K3. Within this complex, AKAP13 interacts directly with PKN1, which in turn recruits MAPK14, MAP2K3 and ZAK. Interacts (phosphorylated form) with YWHAB and YWHAZ. Interaction with YWHAB inhibits activation of RHOA, interferes with PKN1 binding and activation of MAP kinases. Interacts with GNA12. Interacts with IKBKB. Interacts with ESR1, THRA, PPARA and NME2. Interacts (via the C-terminal domain after the PH domain) with MEF2C and RXRB. Interacts (via the C-terminal domain after the PH domain) with PRKD1. Detected in mammary gland. Detected in heart (at protein level). Expressed as a 5.3 kb transcript in hematopoietic cells, skeletal muscle, lung, heart, estrogen-responsive reproductive tissues, including breast ductal epithelium. Also found in testis and breast cancer cell lines. Predominantly expressed as a 10 kb transcript in the heart and at lower levels in the lung, placenta, kidney, pancreas, skeletal muscle and liver. Transcripts of between 6-9 kb are also expressed in myeloid and lymphoid lineages, a variety of epithelial tissues, and in skeletal muscle.

It is found in the cytoplasm. Its subcellular location is the cytosol. It localises to the cell cortex. The protein localises to the nucleus. The protein resides in the membrane. In terms of biological role, scaffold protein that plays an important role in assembling signaling complexes downstream of several types of G protein-coupled receptors. Activates RHOA in response to signaling via G protein-coupled receptors via its function as Rho guanine nucleotide exchange factor. May also activate other Rho family members. Part of a kinase signaling complex that links ADRA1A and ADRA1B adrenergic receptor signaling to the activation of downstream p38 MAP kinases, such as MAPK11 and MAPK14. Part of a signaling complex that links ADRA1B signaling to the activation of RHOA and IKBKB/IKKB, leading to increased NF-kappa-B transcriptional activity. Part of a RHOA-dependent signaling cascade that mediates responses to lysophosphatidic acid (LPA), a signaling molecule that activates G-protein coupled receptors and potentiates transcriptional activation of the glucocorticoid receptor NR3C1. Part of a signaling cascade that stimulates MEF2C-dependent gene expression in response to lysophosphatidic acid (LPA). Part of a signaling pathway that activates MAPK11 and/or MAPK14 and leads to increased transcription activation of the estrogen receptors ESR1 and ESR2. Part of a signaling cascade that links cAMP and EGFR signaling to BRAF signaling and to PKA-mediated phosphorylation of KSR1, leading to the activation of downstream MAP kinases, such as MAPK1 or MAPK3. Functions as a scaffold protein that anchors cAMP-dependent protein kinase (PKA) and PRKD1. This promotes activation of PRKD1, leading to increased phosphorylation of HDAC5 and ultimately cardiomyocyte hypertrophy. Has no guanine nucleotide exchange activity on CDC42, Ras or Rac. Required for normal embryonic heart development, and in particular for normal sarcomere formation in the developing cardiomyocytes. Plays a role in cardiomyocyte growth and cardiac hypertrophy in response to activation of the beta-adrenergic receptor by phenylephrine or isoproterenol. Required for normal adaptive cardiac hypertrophy in response to pressure overload. Plays a role in osteogenesis. The chain is A-kinase anchor protein 13 (AKAP13) from Homo sapiens (Human).